The primary structure comprises 437 residues: GTPase Obg (437 aa).

An Obg domain is found at 2 to 160 (SMFLDTAKIS…RQLELELKIL (159 aa)). One can recognise an OBG-type G domain in the interval 161–338 (ADVGLVGFPS…LLEATAELLA (178 aa)). Residues 167–174 (GFPSVGKS), 192–196 (FTTIV), 214–217 (DLPG), 284–287 (NKMD), and 319–321 (SSL) contribute to the GTP site. 2 residues coordinate Mg(2+): Ser-174 and Thr-194. The 79-residue stretch at 359–437 (GFAETEKDFE…IGKFEFEFVD (79 aa)) folds into the OCT domain.

The protein belongs to the TRAFAC class OBG-HflX-like GTPase superfamily. OBG GTPase family. In terms of assembly, monomer. Requires Mg(2+) as cofactor.

Its subcellular location is the cytoplasm. Functionally, an essential GTPase which binds GTP, GDP and possibly (p)ppGpp with moderate affinity, with high nucleotide exchange rates and a fairly low GTP hydrolysis rate. Plays a role in control of the cell cycle, stress response, ribosome biogenesis and in those bacteria that undergo differentiation, in morphogenesis control. The chain is GTPase Obg from Streptococcus pyogenes serotype M1.